We begin with the raw amino-acid sequence, 424 residues long: CinA-like protein (424 aa).

It belongs to the CinA family.

The sequence is that of CinA-like protein from Shewanella baltica (strain OS155 / ATCC BAA-1091).